A 196-amino-acid polypeptide reads, in one-letter code: Aequorin-2 (196 aa).

Residues 1-7 (MTSKQYS) constitute a propeptide that is removed on maturation. 4 consecutive EF-hand domains span residues 18 to 53 (RWIGRHKHMFNFLDVNHNGKISLDEMVYKASDIVIN), 54 to 108 (NLGA…AKNE), 117 to 146 (DALFDIVDKDQNGAITLDEWKAYTKAAGII), and 147 to 182 (QSSEDCEETFRVCDIDESGQLDVDEMTRQHLGFWYT). Asp-31, Asn-33, Asn-35, Lys-37, and Glu-42 together coordinate Ca(2+). May interact with the chromophore stretches follow at residues 47 to 57 (ASDIVINNLGA), 62 to 72 (AKRHKDAVEAF), and 107 to 117 (NEPTLIRIWGD). Ca(2+)-binding residues include Asp-124, Asp-126, Asn-128, Glu-135, Asp-160, Asp-162, Ser-164, Gln-166, and Glu-171.

This sequence belongs to the aequorin family. In terms of processing, the reduction of the disulfide bond is necessary to regenerate aequorin from apoaequorin.

Its function is as follows. Ca(2+)-dependent bioluminescence photoprotein. Displays an emission peak at 470 nm (blue light). Trace amounts of calcium ion trigger the intramolecular oxidation of the chromophore, coelenterazine into coelenteramide and CO(2) with the concomitant emission of light. This is Aequorin-2 from Aequorea victoria (Water jellyfish).